Reading from the N-terminus, the 187-residue chain is UPF0398 protein LBA1157 (187 aa).

It belongs to the UPF0398 family.

This Lactobacillus acidophilus (strain ATCC 700396 / NCK56 / N2 / NCFM) protein is UPF0398 protein LBA1157.